The primary structure comprises 931 residues: Protein translocase subunit SecA (931 aa).

ATP is bound by residues Q87, 105–109, and D515; that span reads GEGKT. C915, C917, C926, and H927 together coordinate Zn(2+).

Belongs to the SecA family. Monomer and homodimer. Part of the essential Sec protein translocation apparatus which comprises SecA, SecYEG and auxiliary proteins SecDF-YajC and YidC. Requires Zn(2+) as cofactor.

It is found in the cell inner membrane. It localises to the cytoplasm. It catalyses the reaction ATP + H2O + cellular proteinSide 1 = ADP + phosphate + cellular proteinSide 2.. In terms of biological role, part of the Sec protein translocase complex. Interacts with the SecYEG preprotein conducting channel. Has a central role in coupling the hydrolysis of ATP to the transfer of proteins into and across the cell membrane, serving both as a receptor for the preprotein-SecB complex and as an ATP-driven molecular motor driving the stepwise translocation of polypeptide chains across the membrane. The chain is Protein translocase subunit SecA from Burkholderia ambifaria (strain MC40-6).